The sequence spans 548 residues: Membrane protein insertase YidC (548 aa).

The chain crosses the membrane as a helical span at residues 6–26 (NLLVIALLFVSFMIWQAWEQD). Positions 28–56 (NPQPQTQQTTQTTTTAAGSAADQGVPASG) are disordered. The span at 29–42 (PQPQTQQTTQTTTT) shows a compositional bias: low complexity. The next 4 helical transmembrane spans lie at 350 to 370 (FVGN…GIMY), 424 to 444 (FPLI…MGSI), 458 to 478 (LSAQ…MFFI), and 499 to 519 (PVIF…YYIV).

The protein belongs to the OXA1/ALB3/YidC family. Type 1 subfamily. In terms of assembly, interacts with the Sec translocase complex via SecD. Specifically interacts with transmembrane segments of nascent integral membrane proteins during membrane integration.

It is found in the cell inner membrane. Its function is as follows. Required for the insertion and/or proper folding and/or complex formation of integral membrane proteins into the membrane. Involved in integration of membrane proteins that insert both dependently and independently of the Sec translocase complex, as well as at least some lipoproteins. Aids folding of multispanning membrane proteins. This Salmonella agona (strain SL483) protein is Membrane protein insertase YidC.